The primary structure comprises 132 residues: MSTRPEEAGNIKVGSFIVIDGEPCKVVEVEKSKTGKHGSAKARIVGIGFFDGGKRSIVVPTDARVEVPIIKKFTAQVVAFVGDNVQLMNLEDYSTFEIPMPQEEEIKSKLSEGVEVEVWEVMGRHKIMRVRA.

K36 carries the post-translational modification Hypusine.

Belongs to the eIF-5A family.

The protein resides in the cytoplasm. Functionally, functions by promoting the formation of the first peptide bond. This is Translation initiation factor 5A (eIF5A) from Thermofilum pendens (strain DSM 2475 / Hrk 5).